A 397-amino-acid polypeptide reads, in one-letter code: Dual specificity mitogen-activated protein kinase kinase 2 (397 aa).

A disordered region spans residues 1–21 (MAPKRRPVPLIIAPTGEGQST). One can recognise a Protein kinase domain in the interval 69 to 366 (FDPICELGAG…LKMLMGHTFI (298 aa)). ATP is bound by residues 75-83 (LGAGNGGVV) and Lys98. Asp191 functions as the Proton acceptor in the catalytic mechanism. 2 positions are modified to phosphoserine; by RAF: Ser219 and Ser223. The disordered stretch occupies residues 284 to 306 (GGAEGHSMSPRQRPPGRPVSGHG).

The protein belongs to the protein kinase superfamily. STE Ser/Thr protein kinase family. MAP kinase kinase subfamily. In terms of processing, phosphorylation on Ser/Thr by MAP kinase kinase kinases (RAF) positively regulates the kinase activity.

It catalyses the reaction L-seryl-[protein] + ATP = O-phospho-L-seryl-[protein] + ADP + H(+). The catalysed reaction is L-threonyl-[protein] + ATP = O-phospho-L-threonyl-[protein] + ADP + H(+). It carries out the reaction L-tyrosyl-[protein] + ATP = O-phospho-L-tyrosyl-[protein] + ADP + H(+). In terms of biological role, catalyzes the concomitant phosphorylation of a threonine and a tyrosine residue in a Thr-Glu-Tyr sequence located in MAP kinases. The chain is Dual specificity mitogen-activated protein kinase kinase 2 (map2k2) from Cyprinus carpio (Common carp).